We begin with the raw amino-acid sequence, 463 residues long: Glutamate--tRNA ligase 1 (463 aa).

The 'HIGH' region motif lies at 10-20; it reads PSPTGYLHIGG. The 'KMSKS' region motif lies at 238–242; it reads KLSKR. Residue K241 participates in ATP binding.

The protein belongs to the class-I aminoacyl-tRNA synthetase family. Glutamate--tRNA ligase type 1 subfamily. As to quaternary structure, monomer.

Its subcellular location is the cytoplasm. The enzyme catalyses tRNA(Glu) + L-glutamate + ATP = L-glutamyl-tRNA(Glu) + AMP + diphosphate. Functionally, catalyzes the attachment of glutamate to tRNA(Glu) in a two-step reaction: glutamate is first activated by ATP to form Glu-AMP and then transferred to the acceptor end of tRNA(Glu). The sequence is that of Glutamate--tRNA ligase 1 from Helicobacter pylori (strain G27).